Reading from the N-terminus, the 424-residue chain is MIDLKQLRENPEAFAECLSRRGDYDLQAILDLDQKQRELETERSQLQARSNQIGKTIGERMKGGANPKDPEIQNLRQEGSTVKATLSDLEPKERDLKAEIGELLLTIPNLPSDDTPVGKDETANVEVSRWGDEYIPKNAKLAHWEIGENLGILNFERSVKVAQSRFATLVGAGAALERALIQFMLDQQVEAGYVEVLPPVLVNSDSLTATGQLPKFAEESFKCAEDDLWLSPTAEVPVTNLYRDEIINADDLPIFHCAYTPCFRREAGSYGRDTRGLIRLHQFNKVELVKLVHPSTSAAEHEALVKNAAAILEALKLPYRVLQLCTGDLGFSAAKCYDLEVWLPSADCYREISSCSNFLDFQARRGNIRFKESGQKGTQFVHTLNGSGLAVGRTMAAVLENYQQPDGSVQVPDVLQPYLKRKVL.

Position 233–235 (233–235 (TAE)) interacts with L-serine. 264–266 (RRE) contributes to the ATP binding site. Residue Glu287 participates in L-serine binding. ATP is bound at residue 351–354 (EISS). Ser387 provides a ligand contact to L-serine.

It belongs to the class-II aminoacyl-tRNA synthetase family. Type-1 seryl-tRNA synthetase subfamily. As to quaternary structure, homodimer. The tRNA molecule binds across the dimer.

Its subcellular location is the cytoplasm. The catalysed reaction is tRNA(Ser) + L-serine + ATP = L-seryl-tRNA(Ser) + AMP + diphosphate + H(+). It carries out the reaction tRNA(Sec) + L-serine + ATP = L-seryl-tRNA(Sec) + AMP + diphosphate + H(+). The protein operates within aminoacyl-tRNA biosynthesis; selenocysteinyl-tRNA(Sec) biosynthesis; L-seryl-tRNA(Sec) from L-serine and tRNA(Sec): step 1/1. Catalyzes the attachment of serine to tRNA(Ser). Is also able to aminoacylate tRNA(Sec) with serine, to form the misacylated tRNA L-seryl-tRNA(Sec), which will be further converted into selenocysteinyl-tRNA(Sec). In Acaryochloris marina (strain MBIC 11017), this protein is Serine--tRNA ligase.